A 702-amino-acid polypeptide reads, in one-letter code: MSAPVHPVPGADGGDPLRPATPGLRSPQVPIQVPAGSTAAAAVSEAGLPTHGAPDAIVVVRDADGKLRDLSWVPDVDVEVTPVPVNTDDGRSVIRHSTAHVLAQAVQDLFPQAKLGIGPPITDGFYYDFDVAEPFTPEDLKALEKRMRQIVKEGQLFSRRIYESKEQARTEWAGEPYKLELVDDESGDAEIMEVGGDELTAYDNLNARNGERIWGDLCRGPHIPTTKHIPAFKLTRSSAAYWRGNQKNASLQRIYGTAWESQEALDRHLEMITEAQRRDHRKLGIELDLFSFPDEIGSGLAIFHPKGSIVRREMEEYSRRKHIEAGYQFVNTPHITKAQLFHTSGHLDWYAEGIFPPMHLDAEHNDDGTVRKPGQDYYLKPMNCPMHTLIFSSRGRSYRELPLRLFEFGTIYRYEKSGVVHGLTRARGFTMDDSHIFCTREQLHCELASLLRFVLDLLGDYGLEDFYLELSTKDPEKFVGSEEIWEEATAALAEVAENSTLPLVPDPGGAAFYGPKISVQVRDALGRSWQMSTIQVDFNFPERFALEYTSADGTRQRPVMIHRALFGSIERFFGILTEHYAGAFPAWLAPIQVVGIPVTGEHVSYLEEVAAQLKSCGVRTEVDVSDDRMAKKIVRHTNQKVPFMLLAGDRDVRTGSVSFRFGDRTQINGVARDSAVEAIVCWIVDRENDFPTAELVKVTGGE.

Residues 1 to 30 (MSAPVHPVPGADGGDPLRPATPGLRSPQVP) are disordered. One can recognise a TGS domain in the interval 15-84 (DPLRPATPGL…DVDVEVTPVP (70 aa)). The interval 279–585 (DHRKLGIELD…LTEHYAGAFP (307 aa)) is catalytic. Residues Cys384, His435, and His562 each contribute to the Zn(2+) site.

It belongs to the class-II aminoacyl-tRNA synthetase family. Homodimer. The cofactor is Zn(2+).

The protein resides in the cytoplasm. The catalysed reaction is tRNA(Thr) + L-threonine + ATP = L-threonyl-tRNA(Thr) + AMP + diphosphate + H(+). Catalyzes the attachment of threonine to tRNA(Thr) in a two-step reaction: L-threonine is first activated by ATP to form Thr-AMP and then transferred to the acceptor end of tRNA(Thr). Also edits incorrectly charged L-seryl-tRNA(Thr). This chain is Threonine--tRNA ligase, found in Mycobacterium leprae (strain Br4923).